A 344-amino-acid chain; its full sequence is Beta-1,4-galactosyltransferase 4 (344 aa).

Topologically, residues 1-12 (MGCNPPYHLSYR) are cytoplasmic. Residues 13 to 38 (LRLLLLFTLCLTVVGWATSNYFVGAI) traverse the membrane as a helical; Signal-anchor for type II membrane protein segment. Residues 39–344 (QVIPKAKDFM…NITVDFWTAA (306 aa)) are Lumenal-facing. A disulfide bridge connects residues C77 and C118. UDP-alpha-D-galactose is bound by residues 129-133 (PHRNR), 168-170 (FNR), and 195-196 (VD). Residues C189 and C208 are joined by a disulfide bond. D196 is a binding site for Mn(2+). Residue N220 is glycosylated (N-linked (GlcNAc...) asparagine). The UDP-alpha-D-galactose site is built by Y224 and W256. 258 to 261 (GEDD) is a binding site for N-acetyl-D-glucosamine. A Mn(2+)-binding site is contributed by H289. Residue 289 to 291 (HTR) participates in UDP-alpha-D-galactose binding. R301 is an N-acetyl-D-glucosamine binding site. N-linked (GlcNAc...) asparagine glycosylation is present at N335.

The protein belongs to the glycosyltransferase 7 family. In terms of assembly, interacts with SLC35A2/UGT1. It depends on Mn(2+) as a cofactor.

The protein resides in the golgi apparatus membrane. It localises to the secreted. The enzyme catalyses N-acetyl-D-glucosamine + UDP-alpha-D-galactose = beta-D-galactosyl-(1-&gt;4)-N-acetyl-D-glucosamine + UDP + H(+). It carries out the reaction a beta-D-GlcNAc-(1-&gt;3)-beta-D-Gal-(1-&gt;4)-beta-D-Glc-(1&lt;-&gt;1)-Cer(d18:1(4E)) + UDP-alpha-D-galactose = a neolactoside nLc4Cer(d18:1(4E)) + UDP + H(+). The catalysed reaction is 3-O-{beta-D-galactosyl-(1-&gt;3)-[6-O-sulfo-N-acetyl-beta-D-glucosaminyl-(1-&gt;6)]-N-acetyl-alpha-D-galactosaminyl}-L-seryl-[protein] + UDP-alpha-D-galactose = 3-O-{beta-D-galactosyl-(1-&gt;3)-[beta-D-galactosyl-(1-&gt;4)-6-O-sulfo-N-acetyl-beta-D-glucosaminyl-(1-&gt;6)]-N-acetyl-alpha-D-galactosaminyl}-L-seryl-[protein] + UDP + H(+). It catalyses the reaction 3-O-{beta-D-galactosyl-(1-&gt;3)-[6-O-sulfo-N-acetyl-beta-D-glucosaminyl-(1-&gt;6)]-N-acetyl-alpha-D-galactosaminyl}-L-threonyl-[protein] + UDP-alpha-D-galactose = 3-O-{beta-D-galactosyl-(1-&gt;3)-[beta-D-galactosyl-(1-&gt;4)-6-O-sulfo-N-acetyl-beta-D-glucosaminyl-(1-&gt;6)]-N-acetyl-alpha-D-galactosaminyl}-L-threonyl-[protein] + UDP + H(+). The protein operates within protein modification; protein glycosylation. It functions in the pathway glycolipid biosynthesis. Galactose (Gal) transferase involved in the synthesis of terminal N-acetyllactosamine (LacNac) unit present on glycan chains of glycoproteins and glycosphingolipids. Catalyzes the transfer of Gal residue via a beta1-&gt;4 linkage from UDP-Gal to the non-reducing terminal N-acetyl glucosamine 6-O-sulfate (6-O-sulfoGlcNAc) in the linearly growing chain of both N- and O-linked keratan sulfate proteoglycans. Cooperates with B3GNT7 N-acetyl glucosamine transferase and CHST6 and CHST1 sulfotransferases to construct and elongate mono- and disulfated disaccharide units [-&gt;3Galbeta1-&gt;4(6-sulfoGlcNAcbeta)1-&gt;] and [-&gt;3(6-sulfoGalbeta)1-&gt;4(6-sulfoGlcNAcbeta)1-&gt;] within keratan sulfate polymer. Transfers Gal residue via a beta1-&gt;4 linkage to terminal 6-O-sulfoGlcNAc within the LacNac unit of core 2 O-glycans forming 6-sulfo-sialyl-Lewis X (sLex). May contribute to the generation of sLex epitope on mucin-type glycoproteins that serve as ligands for SELL/L-selectin, a major regulator of leukocyte migration. In the biosynthesis pathway of neolacto-series glycosphingolipids, transfers Gal residue via a beta1-&gt;4 linkage to terminal GlcNAc of a lactotriaosylceramide (Lc3Cer) acceptor to form a neolactotetraosylceramide. The protein is Beta-1,4-galactosyltransferase 4 of Mus musculus (Mouse).